The sequence spans 437 residues: MEFVEFSEVSETTKTSSLPQGHEWTVQVPAGSKLTVIVKYGIAEILGTELANDVPYTFQGVIVNIYAIERSMIEWKCLEELEPKVSENKSYHAYIYNLNFALERLRLSSFNGPRVLIVGNASTGKSSLAQMLCSYALKIRHYQPLLVNLNPQDGVFSLPGSITATPISELLDVESSIWGQSITTGATKLHNKQPLVKNYGLENIRDNRPLYLSTITQLASGVQQRLKNDPIVRRSGVIIDTPKLSHLDTEDWSEVGHMIEQFDINAIVVCAESDDLAIELSEVFRTKIGSIVRIPPPGSIIAIDDIMRRALQRVQIREYFYGTTETVLSPYTMGAGFEELTVFRPRNISEYGEDKKDVDLTVFDKIEVNSSNLQHAIIAITNISRKESQDKLNTASIIGYGLITEVNDSKKKLRVLLPVPSRIPDRAMILTEYRYLE.

ATP contacts are provided by residues Glu-23 and 122 to 127; that span reads STGKSS.

This sequence belongs to the Clp1 family. Clp1 subfamily. In terms of assembly, component of a pre-mRNA cleavage factor complex. Interacts directly with PCF11.

It is found in the nucleus. Functionally, required for endonucleolytic cleavage during polyadenylation-dependent pre-mRNA 3'-end formation. The polypeptide is mRNA cleavage and polyadenylation factor CLP1 (Kluyveromyces lactis (strain ATCC 8585 / CBS 2359 / DSM 70799 / NBRC 1267 / NRRL Y-1140 / WM37) (Yeast)).